A 662-amino-acid chain; its full sequence is 3',5'-cyclic-AMP phosphodiesterase, isoform F (662 aa).

Disordered stretches follow at residues 79 to 108 (VPAS…LSQG) and 207 to 245 (SAGQ…RLPT). Polar residues predominate over residues 80 to 98 (PASNKSRRPNQSSSASRSG). The PDEase domain occupies 248-577 (VETPRENELG…DYYQSMIPPS (330 aa)). Catalysis depends on H324, which acts as the Proton donor. 324-328 (HNSLH) serves as a coordination point for 3',5'-cyclic AMP. 4 residues coordinate a divalent metal cation: H328, H364, D365, and D482. 3',5'-cyclic AMP-binding residues include D365, D482, and Q533. Residues 599–616 (EESDQENLAELEEGDESG) show a composition bias toward acidic residues. The disordered stretch occupies residues 599–662 (EESDQENLAE…CQNQPQHGGM (64 aa)). The span at 617–634 (GESTTTGTTGTTAASALS) shows a compositional bias: low complexity. The segment covering 635-646 (GAGGGGGGGGGM) has biased composition (gly residues). The segment covering 652-662 (GCQNQPQHGGM) has biased composition (polar residues).

This sequence belongs to the cyclic nucleotide phosphodiesterase family. PDE4 subfamily. In terms of assembly, monomer. A divalent metal cation is required as a cofactor.

It catalyses the reaction 3',5'-cyclic AMP + H2O = AMP + H(+). It participates in purine metabolism; 3',5'-cyclic AMP degradation; AMP from 3',5'-cyclic AMP: step 1/1. In terms of biological role, hydrolyzes the second messenger cAMP, which is a key regulator of many important physiological processes. Vital for female fertility. Required for learning/memory. This is 3',5'-cyclic-AMP phosphodiesterase, isoform F from Drosophila melanogaster (Fruit fly).